The primary structure comprises 630 residues: Membrane protein insertase YidC (630 aa).

Helical transmembrane passes span 10–30, 396–416, 470–490, 528–548, and 571–591; these read LMFL…VMGP, MVGN…LILF, VPML…TVTI, LIGA…LYGF, and FFPI…VIYW.

This sequence belongs to the OXA1/ALB3/YidC family. Type 1 subfamily. In terms of assembly, interacts with the Sec translocase complex via SecD. Specifically interacts with transmembrane segments of nascent integral membrane proteins during membrane integration.

It localises to the cell inner membrane. Required for the insertion and/or proper folding and/or complex formation of integral membrane proteins into the membrane. Involved in integration of membrane proteins that insert both dependently and independently of the Sec translocase complex, as well as at least some lipoproteins. Aids folding of multispanning membrane proteins. This chain is Membrane protein insertase YidC, found in Caulobacter sp. (strain K31).